The chain runs to 363 residues: uncharacterized protein (363 aa).

It belongs to the TelA family.

This is an uncharacterized protein from Bacillus subtilis (strain 168).